An 87-amino-acid chain; its full sequence is Small ribosomal subunit protein bS18 (87 aa).

Belongs to the bacterial ribosomal protein bS18 family. Part of the 30S ribosomal subunit. Forms a tight heterodimer with protein bS6.

In terms of biological role, binds as a heterodimer with protein bS6 to the central domain of the 16S rRNA, where it helps stabilize the platform of the 30S subunit. The polypeptide is Small ribosomal subunit protein bS18 (Sulfurimonas denitrificans (strain ATCC 33889 / DSM 1251) (Thiomicrospira denitrificans (strain ATCC 33889 / DSM 1251))).